Reading from the N-terminus, the 219-residue chain is MSILYALVARGTVVLAELSTTSTNASTIAKQILEKIPGNGDSHVSYSQDRYVFHVKRTDGLTVLCMADEDAGRRIPFSFLEDIHQRFVRTYGRAIHSAQAYAMNDEFSRVLNQQIEYYSNDPNADTISRIKGEMNQVRDVMIENIDNILDRGERLELLVDKTANMQGNTFRFRKQTRRFNNTVWWRNCKLTLLLILVLLVIIYIGVAFACHGPTLPSCV.

The Cytoplasmic portion of the chain corresponds to 1-189; that stretch reads MSILYALVAR…NNTVWWRNCK (189 aa). One can recognise a Longin domain in the interval 7–111; the sequence is LVARGTVVLA…AMNDEFSRVL (105 aa). Positions 126 to 186 constitute a v-SNARE coiled-coil homology domain; that stretch reads TISRIKGEMN…RRFNNTVWWR (61 aa). Residues 190 to 210 traverse the membrane as a helical; Anchor for type IV membrane protein segment; that stretch reads LTLLLILVLLVIIYIGVAFAC. Topologically, residues 211-219 are vesicular; the sequence is HGPTLPSCV.

The protein belongs to the synaptobrevin family. In terms of tissue distribution, expressed in flowers, leaves, stems and roots.

The protein resides in the vacuole membrane. Its subcellular location is the prevacuolar compartment membrane. Involved in the targeting and/or fusion of transport vesicles to their target membrane. The chain is Vesicle-associated membrane protein 712 from Arabidopsis thaliana (Mouse-ear cress).